Reading from the N-terminus, the 993-residue chain is General transcription factor II-I repeat domain-containing protein 1 (993 aa).

GTF2I-like repeat units lie at residues 117–211 (LGPT…EPKS) and 332–426 (LRET…DGTT). A disordered region spans residues 461–480 (GSRSEKSSISDECEPGTSSE). GTF2I-like repeat units lie at residues 597–691 (DGIG…LEDC), 727–821 (LSRI…RPDD), and 824–918 (ANRL…ICSE). The tract at residues 916–961 (CSEPPKIKNGNTGPKRKRKRVSEGNSISSASSNCSSSSSSSSNMDP) is disordered. Residues 929–936 (PKRKRKRV) carry the Nuclear localization signal motif. Residues 938–961 (EGNSISSASSNCSSSSSSSSNMDP) show a composition bias toward low complexity.

It belongs to the TFII-I family. Interacts (via repeats 4-5) with foxh1/fast1 (via Fork-head domain). Interacts with smad2 and smad3 (via MH1 domain) in a ligand (activin)-dependent manner. Interacts with pou5f1.1/oct-25 to form a repression complex on the promoters of the gsc and mix2 genes. In terms of tissue distribution, uniformly expressed in the embryo in pre- and early gastrula stages. Enriched in the head region of early neurula through tailbud stages.

It is found in the nucleus. Functionally, transcription factor that activates a subset of organizer-specific genes. Binds to the distal element (DE) of the gsc promoter to regulate its expression. In the presence of pou5f1.1/oct-25, forms a repression complex on the promoter of the gsc and mix2 genes to inhibit their transcription. This chain is General transcription factor II-I repeat domain-containing protein 1 (gtf2ird1), found in Xenopus laevis (African clawed frog).